Here is a 344-residue protein sequence, read N- to C-terminus: Putative glycosyltransferase EpsH (344 aa).

It belongs to the glycosyltransferase 2 family.

In terms of biological role, may be involved in the production of the exopolysaccharide (EPS) component of the extracellular matrix during biofilm formation. EPS is responsible for the adhesion of chains of cells into bundles. Required for biofilm maintenance. The polypeptide is Putative glycosyltransferase EpsH (epsH) (Bacillus subtilis (strain 168)).